The primary structure comprises 397 residues: Succinyl-diaminopimelate desuccinylase (397 aa).

Position 73 (histidine 73) interacts with Zn(2+). Aspartate 75 is an active-site residue. Aspartate 106 is a Zn(2+) binding site. The Proton acceptor role is filled by glutamate 140. The Zn(2+) site is built by glutamate 141, glutamate 169, and histidine 366.

The protein belongs to the peptidase M20A family. DapE subfamily. Homodimer. The cofactor is Zn(2+). Requires Co(2+) as cofactor.

It catalyses the reaction N-succinyl-(2S,6S)-2,6-diaminopimelate + H2O = (2S,6S)-2,6-diaminopimelate + succinate. The protein operates within amino-acid biosynthesis; L-lysine biosynthesis via DAP pathway; LL-2,6-diaminopimelate from (S)-tetrahydrodipicolinate (succinylase route): step 3/3. Its function is as follows. Catalyzes the hydrolysis of N-succinyl-L,L-diaminopimelic acid (SDAP), forming succinate and LL-2,6-diaminopimelate (DAP), an intermediate involved in the bacterial biosynthesis of lysine and meso-diaminopimelic acid, an essential component of bacterial cell walls. The polypeptide is Succinyl-diaminopimelate desuccinylase (Rhizobium johnstonii (strain DSM 114642 / LMG 32736 / 3841) (Rhizobium leguminosarum bv. viciae)).